A 186-amino-acid chain; its full sequence is Oligoribonuclease (186 aa).

One can recognise an Exonuclease domain in the interval 8–171; sequence LIWIDLEMTG…DDIRESIAEL (164 aa). The active site involves tyrosine 129.

The protein belongs to the oligoribonuclease family.

The protein localises to the cytoplasm. Its function is as follows. 3'-to-5' exoribonuclease specific for small oligoribonucleotides. This is Oligoribonuclease from Mannheimia succiniciproducens (strain KCTC 0769BP / MBEL55E).